Consider the following 230-residue polypeptide: Small ribosomal subunit protein uS3 (230 aa).

In terms of domain architecture, KH type-2 spans 39–107; that stretch reads VRKFLEKKLE…PAQINIAEIR (69 aa).

The protein belongs to the universal ribosomal protein uS3 family. In terms of assembly, part of the 30S ribosomal subunit. Forms a tight complex with proteins S10 and S14.

In terms of biological role, binds the lower part of the 30S subunit head. Binds mRNA in the 70S ribosome, positioning it for translation. The chain is Small ribosomal subunit protein uS3 from Shewanella amazonensis (strain ATCC BAA-1098 / SB2B).